Here is a 62-residue protein sequence, read N- to C-terminus: Statherin (62 aa).

The signal sequence occupies residues 1 to 19 (MKFLVFAFILALMVSMIGA). The hydroxyapatite-binding; inhibits crystal growth stretch occupies residues 20-25 (DSSEEK). S21 and S22 each carry phosphoserine. A cross-link (isoglutamyl lysine isopeptide (Lys-Gln); in form cyclo-statherin Q-37) is located at residues 25–56 (KFLRRIGRFGYGYGPYQPVPEQPLYPQPYQPQ). Positions 25-58 (KFLRRIGRFGYGYGPYQPVPEQPLYPQPYQPQYQ) form a cross-link, isoglutamyl lysine isopeptide (Lys-Gln); in form cyclo-statherin Q-39. Residues 38–62 (GPYQPVPEQPLYPQPYQPQYQQYTF) are hydrophobic; inhibits precipitation of calcium phosphate salts.

The protein belongs to the histatin/statherin family. Post-translationally, substrate for transglutaminase-2. More than 95% of the cyclized peptide is cyclo-statherin Q-37, and less than 5% is cyclo-statherin Q-39. Cyclized forms account for about 1% of total statherin in saliva. In terms of processing, sulfated on tyrosine residues. Secreted by parotid and submandibular glands.

Its subcellular location is the secreted. Salivary protein that stabilizes saliva supersaturated with calcium salts by inhibiting the precipitation of calcium phosphate salts. It also modulates hydroxyapatite crystal formation on the tooth surface. This Homo sapiens (Human) protein is Statherin (STATH).